We begin with the raw amino-acid sequence, 102 residues long: Colipase-like protein 2 (102 aa).

Positions 1 to 23 are cleaved as a signal peptide; the sequence is MAFTQALVTVLALLAGTLPHRHS. Disulfide bonds link Cys-36/Cys-47, Cys-42/Cys-58, Cys-46/Cys-80, Cys-68/Cys-88, and Cys-82/Cys-99.

It belongs to the colipase family.

The protein resides in the secreted. The protein is Colipase-like protein 2 (Clpsl2) of Mus musculus (Mouse).